A 486-amino-acid polypeptide reads, in one-letter code: uncharacterized protein (486 aa).

An NAD(+)-binding site is contributed by 24-35; the sequence is IVHLGFGAFHRA.

It belongs to the mannitol dehydrogenase family. UxuB subfamily.

This is an uncharacterized protein from Escherichia coli (strain K12).